The sequence spans 255 residues: Flagellar L-ring protein (255 aa).

An N-terminal signal peptide occupies residues 1–25 (MRRHSTRKTVARVAVVALAVGVLAG). Cysteine 26 carries the N-palmitoyl cysteine lipid modification. Cysteine 26 is lipidated: S-diacylglycerol cysteine.

The protein belongs to the FlgH family. The basal body constitutes a major portion of the flagellar organelle and consists of four rings (L,P,S, and M) mounted on a central rod.

Its subcellular location is the cell outer membrane. The protein resides in the bacterial flagellum basal body. In terms of biological role, assembles around the rod to form the L-ring and probably protects the motor/basal body from shearing forces during rotation. This chain is Flagellar L-ring protein, found in Rhodospirillum rubrum (strain ATCC 11170 / ATH 1.1.1 / DSM 467 / LMG 4362 / NCIMB 8255 / S1).